The primary structure comprises 484 residues: Protein nucleotidyltransferase YdiU (484 aa).

ATP is bound by residues Gly-81, Gly-83, Arg-84, Lys-103, Asp-115, Gly-116, Arg-166, and Arg-173. Residue Asp-244 is the Proton acceptor of the active site. Residues Asn-245 and Asp-254 each contribute to the Mg(2+) site. Residue Asp-254 participates in ATP binding.

It belongs to the SELO family. Mg(2+) serves as cofactor. Requires Mn(2+) as cofactor.

It catalyses the reaction L-seryl-[protein] + ATP = 3-O-(5'-adenylyl)-L-seryl-[protein] + diphosphate. The enzyme catalyses L-threonyl-[protein] + ATP = 3-O-(5'-adenylyl)-L-threonyl-[protein] + diphosphate. The catalysed reaction is L-tyrosyl-[protein] + ATP = O-(5'-adenylyl)-L-tyrosyl-[protein] + diphosphate. It carries out the reaction L-histidyl-[protein] + UTP = N(tele)-(5'-uridylyl)-L-histidyl-[protein] + diphosphate. It catalyses the reaction L-seryl-[protein] + UTP = O-(5'-uridylyl)-L-seryl-[protein] + diphosphate. The enzyme catalyses L-tyrosyl-[protein] + UTP = O-(5'-uridylyl)-L-tyrosyl-[protein] + diphosphate. In terms of biological role, nucleotidyltransferase involved in the post-translational modification of proteins. It can catalyze the addition of adenosine monophosphate (AMP) or uridine monophosphate (UMP) to a protein, resulting in modifications known as AMPylation and UMPylation. The polypeptide is Protein nucleotidyltransferase YdiU (Shewanella baltica (strain OS195)).